Reading from the N-terminus, the 301-residue chain is tRNA-cytidine(32) 2-sulfurtransferase (301 aa).

Positions 55 to 60 match the PP-loop motif motif; it reads SGGKDS. Positions 130, 133, and 221 each coordinate [4Fe-4S] cluster.

This sequence belongs to the TtcA family. Homodimer. Mg(2+) is required as a cofactor. It depends on [4Fe-4S] cluster as a cofactor.

It localises to the cytoplasm. It catalyses the reaction cytidine(32) in tRNA + S-sulfanyl-L-cysteinyl-[cysteine desulfurase] + AH2 + ATP = 2-thiocytidine(32) in tRNA + L-cysteinyl-[cysteine desulfurase] + A + AMP + diphosphate + H(+). It functions in the pathway tRNA modification. In terms of biological role, catalyzes the ATP-dependent 2-thiolation of cytidine in position 32 of tRNA, to form 2-thiocytidine (s(2)C32). The sulfur atoms are provided by the cysteine/cysteine desulfurase (IscS) system. This chain is tRNA-cytidine(32) 2-sulfurtransferase, found in Acinetobacter baumannii (strain AB307-0294).